Reading from the N-terminus, the 414-residue chain is uncharacterized protein (414 aa).

A disordered region spans residues 87–117; that stretch reads KTNDDNKTNGRETHLRPSPSKPEYTGRPTQN. The segment covering 88 to 101 has biased composition (basic and acidic residues); the sequence is TNDDNKTNGRETHL. Residues 243-405 adopt a coiled-coil conformation; sequence SMLQSSIDKL…RNKLEMEVER (163 aa).

This is an uncharacterized protein from Encephalitozoon cuniculi (strain GB-M1) (Microsporidian parasite).